The following is a 115-amino-acid chain: Toxin-like structure LSTX-D1 (115 aa).

A signal peptide spans 1-22; that stretch reads MKVLVLFSVLFLTLFSYSSTEA. The propeptide occupies 23-44; that stretch reads IDEFDSDAEEDMLSLMANEQVR. 4 cysteine pairs are disulfide-bonded: C48–C63, C55–C72, C62–C87, and C74–C85.

This sequence belongs to the neurotoxin 19 (CSTX) family. 01 subfamily. As to expression, expressed by the venom gland.

The protein localises to the secreted. The sequence is that of Toxin-like structure LSTX-D1 from Lycosa singoriensis (Wolf spider).